A 459-amino-acid polypeptide reads, in one-letter code: Argininosuccinate lyase (459 aa).

The protein belongs to the lyase 1 family. Argininosuccinate lyase subfamily.

It is found in the cytoplasm. It carries out the reaction 2-(N(omega)-L-arginino)succinate = fumarate + L-arginine. Its pathway is amino-acid biosynthesis; L-arginine biosynthesis; L-arginine from L-ornithine and carbamoyl phosphate: step 3/3. In Lactococcus lactis subsp. lactis (strain IL1403) (Streptococcus lactis), this protein is Argininosuccinate lyase.